We begin with the raw amino-acid sequence, 435 residues long: Asparagine--tRNA ligase (435 aa).

It belongs to the class-II aminoacyl-tRNA synthetase family. Homodimer.

Its subcellular location is the cytoplasm. The catalysed reaction is tRNA(Asn) + L-asparagine + ATP = L-asparaginyl-tRNA(Asn) + AMP + diphosphate + H(+). The polypeptide is Asparagine--tRNA ligase (Leptospira interrogans serogroup Icterohaemorrhagiae serovar Lai (strain 56601)).